Reading from the N-terminus, the 93-residue chain is Defensin alpha 4 (93 aa).

The first 19 residues, 1–19 (MRTLTLLITLLLLALHTQA), serve as a signal peptide directing secretion. Residues 20–62 (ESPQERAKAAPDQDMVMEDQDIFISFGGYKGTVLQDAVVKAGQ) constitute a propeptide that is removed on maturation. 3 disulfide bridges follow: Cys64/Cys92, Cys66/Cys81, and Cys71/Cys91.

This sequence belongs to the alpha-defensin family. Expressed in neutrophils (at protein level). Highest expression in bone marrow and to a much lesser extent in small intestine.

The protein resides in the secreted. Its function is as follows. Host-defense peptide that has antimicrobial activity against Gram-positive and Gram-negative bacteria and fungi (in vitro). Exhibits activity against E.coli, A.calcoaceticus, S,aureus and C.albicans. The polypeptide is Defensin alpha 4 (Rattus norvegicus (Rat)).